We begin with the raw amino-acid sequence, 131 residues long: Translation initiation factor 5A (131 aa).

Lysine 37 carries the hypusine modification.

Belongs to the eIF-5A family.

The protein resides in the cytoplasm. In terms of biological role, functions by promoting the formation of the first peptide bond. The sequence is that of Translation initiation factor 5A (eIF5A) from Methanococcus maripaludis (strain C7 / ATCC BAA-1331).